A 185-amino-acid chain; its full sequence is ATP-dependent protease subunit HslV (185 aa).

The active site involves Thr-12. The Na(+) site is built by Ala-168, Cys-171, and Thr-174.

Belongs to the peptidase T1B family. HslV subfamily. As to quaternary structure, a double ring-shaped homohexamer of HslV is capped on each side by a ring-shaped HslU homohexamer. The assembly of the HslU/HslV complex is dependent on binding of ATP.

The protein localises to the cytoplasm. The catalysed reaction is ATP-dependent cleavage of peptide bonds with broad specificity.. With respect to regulation, allosterically activated by HslU binding. Functionally, protease subunit of a proteasome-like degradation complex believed to be a general protein degrading machinery. This chain is ATP-dependent protease subunit HslV, found in Cereibacter sphaeroides (strain ATCC 17025 / ATH 2.4.3) (Rhodobacter sphaeroides).